The chain runs to 294 residues: Release factor glutamine methyltransferase (294 aa).

Glutamate 148 and asparagine 201 together coordinate S-adenosyl-L-methionine. 201-204 lines the substrate pocket; sequence NPPY.

Belongs to the protein N5-glutamine methyltransferase family. PrmC subfamily.

The enzyme catalyses L-glutaminyl-[peptide chain release factor] + S-adenosyl-L-methionine = N(5)-methyl-L-glutaminyl-[peptide chain release factor] + S-adenosyl-L-homocysteine + H(+). Its function is as follows. Methylates the class 1 translation termination release factors RF1/PrfA and RF2/PrfB on the glutamine residue of the universally conserved GGQ motif. The protein is Release factor glutamine methyltransferase of Bifidobacterium longum (strain NCC 2705).